The chain runs to 127 residues: NADPH-dependent 7-cyano-7-deazaguanine reductase (127 aa).

The active-site Thioimide intermediate is the Cys40. Residue Asp47 is the Proton donor of the active site. Substrate-binding positions include 62-64 (VEL) and 81-82 (HE).

It belongs to the GTP cyclohydrolase I family. QueF type 1 subfamily.

The protein localises to the cytoplasm. The enzyme catalyses 7-aminomethyl-7-carbaguanine + 2 NADP(+) = 7-cyano-7-deazaguanine + 2 NADPH + 3 H(+). Its pathway is tRNA modification; tRNA-queuosine biosynthesis. In terms of biological role, catalyzes the NADPH-dependent reduction of 7-cyano-7-deazaguanine (preQ0) to 7-aminomethyl-7-deazaguanine (preQ1). This is NADPH-dependent 7-cyano-7-deazaguanine reductase from Campylobacter jejuni subsp. jejuni serotype O:2 (strain ATCC 700819 / NCTC 11168).